The following is a 1161-amino-acid chain: PAN2-PAN3 deadenylation complex catalytic subunit pan2 (1161 aa).

WD repeat units lie at residues glycine 20–serine 59, alanine 102–glutamine 145, and alanine 276–glutamate 315. The segment at methionine 316–aspartate 452 is linker. Positions aspartate 453 to arginine 822 constitute a USP domain. Residues valine 871–leucine 1049 form the Exonuclease domain. A divalent metal cation is bound by residues aspartate 874, glutamate 876, aspartate 983, and aspartate 1042. The segment at glycine 1094–lysine 1161 is disordered. The segment covering valine 1097–threonine 1110 has biased composition (polar residues). The span at alanine 1116–proline 1129 shows a compositional bias: low complexity. Residues threonine 1145–phenylalanine 1155 are compositionally biased toward gly residues.

Belongs to the peptidase C19 family. PAN2 subfamily. In terms of assembly, forms a heterotrimer with an asymmetric homodimer of the regulatory subunit pan3 to form the poly(A)-nuclease (PAN) deadenylation complex. Requires a divalent metal cation as cofactor.

It localises to the cytoplasm. It carries out the reaction Exonucleolytic cleavage of poly(A) to 5'-AMP.. With respect to regulation, positively regulated by the regulatory subunit pan3. Functionally, catalytic subunit of the poly(A)-nuclease (PAN) deadenylation complex, one of two cytoplasmic mRNA deadenylases involved in mRNA turnover. PAN specifically shortens poly(A) tails of RNA and the activity is stimulated by poly(A)-binding protein pab1. PAN deadenylation is followed by rapid degradation of the shortened mRNA tails by the CCR4-NOT complex. Deadenylated mRNAs are then degraded by two alternative mechanisms, namely exosome-mediated 3'-5' exonucleolytic degradation, or deadenylation-dependent mRNA decaping and subsequent 5'-3' exonucleolytic degradation by xrn1. May also be involved in post-transcriptional maturation of mRNA poly(A) tails. This Aspergillus clavatus (strain ATCC 1007 / CBS 513.65 / DSM 816 / NCTC 3887 / NRRL 1 / QM 1276 / 107) protein is PAN2-PAN3 deadenylation complex catalytic subunit pan2.